The chain runs to 546 residues: DDB1- and CUL4-associated factor 11 (546 aa).

Residues methionine 1 to glycine 10 are compositionally biased toward polar residues. Positions methionine 1 to valine 40 are disordered. 2 positions are modified to phosphoserine: serine 73 and serine 75. The tract at residues histidine 79–aspartate 100 is disordered. The span at aspartate 80–aspartate 89 shows a compositional bias: basic and acidic residues. WD repeat units follow at residues threonine 170 to lysine 210, aspartate 216 to aspartate 258, glutamate 263 to glutamine 302, serine 305 to proline 345, glycine 353 to glycine 392, glycine 435 to threonine 480, and threonine 481 to aspartate 520. The tract at residues aspartate 521 to glutamine 546 is disordered. Polar residues predominate over residues histidine 537 to glutamine 546.

As to quaternary structure, interacts with DDB1 and CUL4A.

The protein operates within protein modification; protein ubiquitination. In terms of biological role, may function as a substrate receptor for CUL4-DDB1 E3 ubiquitin-protein ligase complex. This Bos taurus (Bovine) protein is DDB1- and CUL4-associated factor 11 (DCAF11).